We begin with the raw amino-acid sequence, 509 residues long: Cytochrome P450 monooxygenase hepC (509 aa).

The helical transmembrane segment at 5–25 threads the bilayer; that stretch reads MIIPSFWTGTAIIGLVACAYV. Position 454 (Cys-454) interacts with heme. Residue Asn-491 is glycosylated (N-linked (GlcNAc...) asparagine).

The protein belongs to the cytochrome P450 family. Requires heme as cofactor.

The protein resides in the membrane. It functions in the pathway secondary metabolite biosynthesis. Cytochrome P450 monooxygenase; part of the gene cluster that mediates the biosynthesis of heptelidic acid (HA), a sesquiterpene lactone that acts as an inhibitor of glyceraldehyde-3-phosphatedehydrogenase (GAPDH) and a growth inhibitor of the salt-tolerant lactic acid bacteria in soy sauce brewing. The polypeptide is Cytochrome P450 monooxygenase hepC (Aspergillus oryzae (strain ATCC 42149 / RIB 40) (Yellow koji mold)).